The sequence spans 89 residues: Small ribosomal subunit protein bS16 (89 aa).

The protein belongs to the bacterial ribosomal protein bS16 family.

The sequence is that of Small ribosomal subunit protein bS16 from Chloroflexus aggregans (strain MD-66 / DSM 9485).